Reading from the N-terminus, the 89-residue chain is Dynein light chain LC6, flagellar outer arm (89 aa).

It belongs to the dynein light chain family. Consists of at least 3 heavy chains (alpha, beta and gamma), 2 intermediate chains and 8 light chains.

The protein localises to the cytoplasm. Its subcellular location is the cytoskeleton. The protein resides in the flagellum axoneme. In Heliocidaris crassispina (Sea urchin), this protein is Dynein light chain LC6, flagellar outer arm.